A 383-amino-acid polypeptide reads, in one-letter code: GTPase-interacting component 2 (383 aa).

The interval 63-106 (SNKKNIELPPLSPNSHPSCHHRRSNSNSAKSKESSSSSSSANKT) is disordered. Over residues 87–105 (NSNSAKSKESSSSSSSANK) the composition is skewed to low complexity. Positions 134 to 147 (ISTPFDFQHISHAD) constitute a CRIB domain. Positions 155 to 165 (EQLQEPSSLST) are enriched in polar residues. Residues 155–189 (EQLQEPSSLSTEIKDDYTSSSSKRDSKSLNKAFVT) form a disordered region. A compositionally biased stretch (basic and acidic residues) spans 166–182 (EIKDDYTSSSSKRDSKS). A phosphoserine mark is found at S254, S258, S337, S345, and S367. A disordered region spans residues 319-361 (ETPNSNKDSAKAFFPSRQSPLPKRRNSIATPSPQSKFSYSDSP). Polar residues predominate over residues 345–361 (SIATPSPQSKFSYSDSP).

Belongs to the BORG/CEP family. In terms of assembly, interacts with GTP-bound CDC42.

The protein resides in the bud neck. It localises to the bud tip. Its subcellular location is the cytoplasm. The protein localises to the cell cortex. It is found in the cytoskeleton. Its function is as follows. Required for cell size and shape control, bud site selection, bud emergence, actin cytoskeletal organization, mitotic spindle orientation/positioning, and mating projection formation in response to mating pheromone. The polypeptide is GTPase-interacting component 2 (GIC2) (Saccharomyces cerevisiae (strain ATCC 204508 / S288c) (Baker's yeast)).